Reading from the N-terminus, the 302-residue chain is tRNA pseudouridine synthase B (302 aa).

The Nucleophile role is filled by aspartate 48.

The protein belongs to the pseudouridine synthase TruB family. Type 1 subfamily.

It carries out the reaction uridine(55) in tRNA = pseudouridine(55) in tRNA. Responsible for synthesis of pseudouridine from uracil-55 in the psi GC loop of transfer RNAs. The polypeptide is tRNA pseudouridine synthase B (Xylella fastidiosa (strain Temecula1 / ATCC 700964)).